The following is a 417-amino-acid chain: Synaptic vesicle membrane protein VAT-1 homolog-like (417 aa).

Disordered regions lie at residues 1–33 and 382–417; these read MAKE…GSHR and PTPL…PFIQ. Ser-390 is subject to Phosphoserine. Residues Thr-391 and Thr-393 each carry the phosphothreonine modification. Ser-394 carries the phosphoserine modification. Over residues 395–405 the composition is skewed to acidic residues; it reads EAGEEEEDHEG. The segment covering 406–417 has biased composition (basic and acidic residues); that stretch reads DSENKERMPFIQ.

It belongs to the zinc-containing alcohol dehydrogenase family. Quinone oxidoreductase subfamily.

The sequence is that of Synaptic vesicle membrane protein VAT-1 homolog-like (Vat1l) from Mus musculus (Mouse).